The primary structure comprises 395 residues: 8-amino-7-oxononanoate synthase/2-amino-3-ketobutyrate coenzyme A ligase (395 aa).

110–111 (GF) contacts pyridoxal 5'-phosphate. H135 serves as a coordination point for substrate. Pyridoxal 5'-phosphate-binding positions include S182, 207-210 (DDAH), and 239-242 (TLSK). K242 is modified (N6-(pyridoxal phosphate)lysine). Position 356 (T356) interacts with substrate.

The protein belongs to the class-II pyridoxal-phosphate-dependent aminotransferase family. As to quaternary structure, homodimer. It depends on pyridoxal 5'-phosphate as a cofactor.

It catalyses the reaction 6-carboxyhexanoyl-[ACP] + L-alanine + H(+) = (8S)-8-amino-7-oxononanoate + holo-[ACP] + CO2. The enzyme catalyses glycine + acetyl-CoA = (2S)-2-amino-3-oxobutanoate + CoA. The protein operates within cofactor biosynthesis; biotin biosynthesis. Catalyzes the decarboxylative condensation of pimeloyl-[acyl-carrier protein] and L-alanine to produce 8-amino-7-oxononanoate (AON), [acyl-carrier protein], and carbon dioxide. Can also use pimeloyl-CoA instead of pimeloyl-ACP as substrate. It also converts 2-amino-3-ketobutyrate and CoA to glycine and acetyl-CoA. Activity is also observed with the following combinations of substrates: acetyl-CoA and either L-alanine or L-serine, pimeloyl-CoA and either glycine or L-serine, and palmitoyl-CoA with L-alanine. This Thermus thermophilus (strain ATCC 27634 / DSM 579 / HB8) protein is 8-amino-7-oxononanoate synthase/2-amino-3-ketobutyrate coenzyme A ligase.